The chain runs to 159 residues: Ribosomal RNA large subunit methyltransferase H (159 aa).

Residues leucine 76, glycine 108, and 127–132 (FSKMTF) each bind S-adenosyl-L-methionine.

The protein belongs to the RNA methyltransferase RlmH family. As to quaternary structure, homodimer.

It localises to the cytoplasm. The catalysed reaction is pseudouridine(1915) in 23S rRNA + S-adenosyl-L-methionine = N(3)-methylpseudouridine(1915) in 23S rRNA + S-adenosyl-L-homocysteine + H(+). Its function is as follows. Specifically methylates the pseudouridine at position 1915 (m3Psi1915) in 23S rRNA. This Clostridium novyi (strain NT) protein is Ribosomal RNA large subunit methyltransferase H.